A 100-amino-acid polypeptide reads, in one-letter code: Large ribosomal subunit protein uL23 (100 aa).

The protein belongs to the universal ribosomal protein uL23 family. As to quaternary structure, part of the 50S ribosomal subunit. Contacts protein L29, and trigger factor when it is bound to the ribosome.

In terms of biological role, one of the early assembly proteins it binds 23S rRNA. One of the proteins that surrounds the polypeptide exit tunnel on the outside of the ribosome. Forms the main docking site for trigger factor binding to the ribosome. The polypeptide is Large ribosomal subunit protein uL23 (Lactobacillus acidophilus (strain ATCC 700396 / NCK56 / N2 / NCFM)).